The following is a 300-amino-acid chain: Ribosomal protein bS6--L-glutamate ligase (300 aa).

The ATP-grasp domain occupies 104-287 (MQLLARQGID…IAGKMIRWIE (184 aa)). Residues K141, 178–179 (EY), D187, and 211–213 (RSN) each bind ATP. Mg(2+)-binding residues include D248, E260, and N262. The Mn(2+) site is built by D248, E260, and N262.

It belongs to the RimK family. It depends on Mg(2+) as a cofactor. Requires Mn(2+) as cofactor.

An L-glutamate ligase that catalyzes the ATP-dependent post-translational addition of glutamate residues to the C-terminus of ribosomal protein bS6 (RpsF). Is also able to catalyze the synthesis of poly-alpha-glutamate in vitro, via ATP hydrolysis from unprotected glutamate as substrate. The number of glutamate residues added to either RpsF or to poly-alpha-glutamate changes with pH. The protein is Ribosomal protein bS6--L-glutamate ligase of Escherichia fergusonii (strain ATCC 35469 / DSM 13698 / CCUG 18766 / IAM 14443 / JCM 21226 / LMG 7866 / NBRC 102419 / NCTC 12128 / CDC 0568-73).